Here is an 874-residue protein sequence, read N- to C-terminus: MLKFLKNLLDDNAREIKRLTARVEEINSLEPQMQKLSDEELRAKTGEFKERIARGESLDELLPEAFAVVREASRRVLGMRHFDVQLMGGIVLHEGKIAEMKTGEGKTLVATLPAYLNALTGRGVHIVTVNDYLARRDAEWMGKIYKFLGLSVGLVVHGMDYAEKKAAYLADITYGTNNEFGFDYLRDNMAIHPDQVVQRELYYAIIDEVDSILIDEARTPLIISGEAEKSTDLYYTFAKIVKQLVPGEDYTVDEKAHAVMPTEAGIHKVEKMLGIQNLYADEHMELTHHLNAALKAQALMKRDRDYVVKDGQVIIVDEFTGRLMFGRRYSDGLHQAIEAKEGVKIEQETQTLATITFQNYFRMYEKLAGMTGTAETEENEFRKIYNLSVVVIPTHKPMIRKDLPDVIFKTEKAKFKAIVEEVARRHQTGQPILIGTISIEKSEMLSEMLKKRGIPHQVLNAKYHEKEAEIVAQAGRLGAVTIATNMAGRGTDILLGGNPEFLALQELRKMGKTPEDDPELYRELLAKYKKITDEEHKKVVELGGLHIIGTERHESRRIDNQLRGRAGRQGDPGSSQFFISLEDDLMRLFGSDNIAGLMDRLGLDEDTPIEHPLITRSIETAQKRVENRNFEIRKHVLEYDNVMNQQRELIYSQRRRVLFGEDVLTFVHQMIEAVVERAVDTYCPDGVHPEEWDLKGLLEYAHNVFLPNHQLTPEDLADTGKKALVEFLVEKAKEYYKKREEELGGEQLRELERYVILRVVDEKWMDHLDAMDQLREGIGLRAYGQKDPLVEYKIESVEMFNNMIAAIQEDVVRYLMRLSVVRQPETRRVRRVVENRYQEEGPKKPYRREQKIGRNDPCPCGSGKKYKKCCGRNG.

Residues Gln85, 103–107 (GEGKT), and Asp492 contribute to the ATP site. Basic and acidic residues predominate over residues 839–854 (EEGPKKPYRREQKIGR). Residues 839–864 (EEGPKKPYRREQKIGRNDPCPCGSGK) are disordered. Cys858, Cys860, Cys869, and Cys870 together coordinate Zn(2+).

Belongs to the SecA family. In terms of assembly, monomer and homodimer. Part of the essential Sec protein translocation apparatus which comprises SecA, SecYEG and auxiliary proteins SecDF. Other proteins may also be involved. The cofactor is Zn(2+).

It localises to the cell membrane. The protein localises to the cytoplasm. The enzyme catalyses ATP + H2O + cellular proteinSide 1 = ADP + phosphate + cellular proteinSide 2.. Part of the Sec protein translocase complex. Interacts with the SecYEG preprotein conducting channel. Has a central role in coupling the hydrolysis of ATP to the transfer of proteins into and across the cell membrane, serving as an ATP-driven molecular motor driving the stepwise translocation of polypeptide chains across the membrane. This Carboxydothermus hydrogenoformans (strain ATCC BAA-161 / DSM 6008 / Z-2901) protein is Protein translocase subunit SecA.